The following is a 510-amino-acid chain: Transcriptional regulatory protein GAT1 (510 aa).

The residue at position 167 (Ser167) is a Phosphoserine. The span at Asn220 to Leu256 shows a compositional bias: low complexity. Disordered stretches follow at residues Asn220–Ser311 and Gln358–Lys383. 2 positions are modified to phosphoserine: Ser262 and Ser270. Residues Ser274–Lys287 show a composition bias toward basic residues. The span at Ser294–Pro306 shows a compositional bias: low complexity. The GATA-type zinc finger occupies Cys310–Cys334. Thr369 bears the Phosphothreonine mark. A phosphoserine mark is found at Ser399 and Ser418.

The protein resides in the nucleus. In terms of biological role, positive regulator of multiple nitrogen catabolic genes. This is Transcriptional regulatory protein GAT1 (GAT1) from Saccharomyces cerevisiae (strain ATCC 204508 / S288c) (Baker's yeast).